We begin with the raw amino-acid sequence, 208 residues long: MGKKRSASSSRWLQEHFSDKYVQQAQKKGLRSRAWFKLDEIQGTDKIFRPGMTVVDLGAAPGGWSQYVVTQIGDKGRVIACDLLPMDPIVGVDFLQGDFRDELVLAALMERVGDAKVQVVMSDMAPNMSGTPSVDIPRAMYLVELAFEMAKDVLAPGGSFVVKVFQGEGFDEYLGQIRSLFTKVKIRKPEASRARSREVYIVATGRKL.

Residues glycine 62, tryptophan 64, aspartate 82, aspartate 98, and aspartate 123 each contribute to the S-adenosyl-L-methionine site. Lysine 163 functions as the Proton acceptor in the catalytic mechanism.

It belongs to the class I-like SAM-binding methyltransferase superfamily. RNA methyltransferase RlmE family.

It is found in the cytoplasm. The catalysed reaction is uridine(2552) in 23S rRNA + S-adenosyl-L-methionine = 2'-O-methyluridine(2552) in 23S rRNA + S-adenosyl-L-homocysteine + H(+). In terms of biological role, specifically methylates the uridine in position 2552 of 23S rRNA at the 2'-O position of the ribose in the fully assembled 50S ribosomal subunit. This chain is Ribosomal RNA large subunit methyltransferase E, found in Edwardsiella ictaluri (strain 93-146).